Consider the following 373-residue polypeptide: MNTLDIDKPPSSTRVVVAMSGGVDSSAVAALLKEQGYDVVGVTLQLYDLATSGIEPGACRPNTCCAGKDIHDARAVADALGIPHYVLDFEETFRRDVVERFAQTYLEARTPVPCIECNRTVKFRDLLGVAKDLGGDALATGHYVRRRPGVDGPELWTGRDPGRDQSYFLFATTRDQLDFLRFPLGDMAGKEETRAIAARHHLPVAAKRDSQDICFVPDGDYAALVTRLHPDAARPGEIVDTAGKVLGRHGGLIHYTIGQRRGLGLGGGPPLYVVALEPETGRVVVGSREDLNCLTIQVEAVNWLGGDETELRVAVKVRSTRPAAPALLRRLSGDRAQVILDHPEQGVAPGQACVFYQGERVLGGGWICPSREA.

Residues 18–25 (AMSGGVDS) and Leu44 each bind ATP. Cys117 serves as the catalytic Nucleophile. A disulfide bridge connects residues Cys117 and Cys214. Position 141 (Gly141) interacts with ATP. Residues 163-165 (RDQ) are interaction with tRNA. The active-site Cysteine persulfide intermediate is Cys214.

It belongs to the MnmA/TRMU family.

The protein localises to the cytoplasm. It carries out the reaction S-sulfanyl-L-cysteinyl-[protein] + uridine(34) in tRNA + AH2 + ATP = 2-thiouridine(34) in tRNA + L-cysteinyl-[protein] + A + AMP + diphosphate + H(+). Its function is as follows. Catalyzes the 2-thiolation of uridine at the wobble position (U34) of tRNA, leading to the formation of s(2)U34. The polypeptide is tRNA-specific 2-thiouridylase MnmA (Paramagnetospirillum magneticum (strain ATCC 700264 / AMB-1) (Magnetospirillum magneticum)).